The following is a 682-amino-acid chain: uncharacterized protein (682 aa).

Residues 284–487 form the MCM domain; that stretch reads VVNILADRLI…KDKDIAEYIV (204 aa). 329 to 336 contacts ATP; the sequence is TDPGIGKT.

This sequence belongs to the MCM family.

This is an uncharacterized protein from Methanocaldococcus jannaschii (strain ATCC 43067 / DSM 2661 / JAL-1 / JCM 10045 / NBRC 100440) (Methanococcus jannaschii).